Consider the following 530-residue polypeptide: Chaperone Ric-8A (530 aa).

Residue Ser435 is modified to Phosphoserine. Phosphothreonine occurs at positions 440 and 442. Ser501, Ser522, Ser523, and Ser527 each carry phosphoserine.

It belongs to the synembryn family. Interacts with GDP-bound G alpha proteins GNAI1, GNAO1 and GNAQ, and with GNA13 with lower affinity. Does not interact with G-alpha proteins when they are in complex with subunits beta and gamma. Interacts (via C-terminus) with RGS14; the interaction stimulates the dissociation of the complex between RGS14 and the active GTP-bound form of GNAI1. Interacts with NCS1; interaction is favored in the absence of Ca(2+) and myristoylation of NCS1 is not required. Phosphorylated at Ser-435 and Thr-440 by CK2, stabilizing its interface with G alpha proteins.

The protein resides in the cytoplasm. It localises to the cell cortex. Functionally, chaperone that specifically binds and folds nascent G alpha proteins prior to G protein heterotrimer formation, promoting their stability and activity: folds GNAI1, GNAO1, GNA13 and GNAQ. Does not fold G(s) G-alpha proteins GNAS nor GNAL. Also acts as a guanine nucleotide exchange factor (GEF) for G alpha proteins by stimulating exchange of bound GDP for free GTP. Involved in regulation of microtubule pulling forces during mitotic movement of chromosomes by stimulating G(i)-alpha protein (GNAI1), possibly leading to release G(i)-alpha-GTP and NuMA proteins from the NuMA-GPSM2-G(i)-alpha-GDP complex. Also acts as an activator for G(q)-alpha (GNAQ) protein by enhancing the G(q)-coupled receptor-mediated ERK activation. The sequence is that of Chaperone Ric-8A (RIC8A) from Macaca fascicularis (Crab-eating macaque).